We begin with the raw amino-acid sequence, 403 residues long: Creatinase (403 aa).

The active site involves His-232.

Belongs to the peptidase M24 family. Creatinase subfamily. In terms of assembly, homodimer.

It carries out the reaction creatine + H2O = sarcosine + urea. In Flavobacterium sp. (strain U-188), this protein is Creatinase.